The primary structure comprises 692 residues: Elongation factor G (692 aa).

Residues 8–282 (EKTRNIGIMA…AIVDYLPAPT (275 aa)) form the tr-type G domain. GTP contacts are provided by residues 17-24 (AHIDAGKT), 81-85 (DTPGH), and 135-138 (NKMD).

The protein belongs to the TRAFAC class translation factor GTPase superfamily. Classic translation factor GTPase family. EF-G/EF-2 subfamily.

The protein localises to the cytoplasm. In terms of biological role, catalyzes the GTP-dependent ribosomal translocation step during translation elongation. During this step, the ribosome changes from the pre-translocational (PRE) to the post-translocational (POST) state as the newly formed A-site-bound peptidyl-tRNA and P-site-bound deacylated tRNA move to the P and E sites, respectively. Catalyzes the coordinated movement of the two tRNA molecules, the mRNA and conformational changes in the ribosome. The chain is Elongation factor G from Pelotomaculum thermopropionicum (strain DSM 13744 / JCM 10971 / SI).